A 1108-amino-acid polypeptide reads, in one-letter code: Folliculin-interacting protein 2 (1108 aa).

The region spanning 38–456 (FGLSDIRLLV…TVMPVDHPPI (419 aa)) is the uDENN FNIP1/2-type domain. Disordered stretches follow at residues 89-112 (QESS…GGSL), 209-233 (RTGS…DRDS), 598-635 (SEGV…AEPD), and 649-671 (QNDQ…PRVR). Positions 91–106 (SSSSSGSSSSGSSSSH) are enriched in low complexity. 2 positions are modified to phosphoserine: Ser212 and Ser217. The cDENN FNIP1/2-type domain occupies 464 to 1034 (TSQSVNMLAK…VSSLLQSILQ (571 aa)). The interaction with PRKAA1 stretch occupies residues 540-905 (DDQVINGSKI…DEACVLALLE (366 aa)). The span at 606–620 (LGHKPEKNRCKRPEQ) shows a compositional bias: basic and acidic residues. Over residues 652–663 (QEATQDCSSSPP) the composition is skewed to polar residues. Phosphoserine occurs at positions 720, 721, and 723. In terms of domain architecture, dDENN FNIP1/2-type spans 1044-1099 (FCIMHLEDRLQEMYLKSKMLSEYLRGHTRVHVKELSVVLGIESNDLPLLTAIASTH).

The protein belongs to the FNIP family. Homodimer and homomultimer. Heterodimer and heteromultimer with FNIP1. Interacts (via C-terminus) with FLCN (via C-terminus). Phosphorylated FLCN is preferentially bound. Component of the lysosomal folliculin complex (LFC), composed of FLCN, FNIP1 (or FNIP2), RagA/RRAGA or RagB/RRAGB GDP-bound, RagC/RRAGC or RagD/RRAGD GTP-bound, and Ragulator. Interacts with PRKAA1, PRKAB1 and PRKAG1 subunits of 5'-AMP-activated protein kinase. Interacts with HSP70, HSP90AA1, STIP1, PTGES3, CDC37, BRAF, GCR and CDK4. Phosphorylated by AMPK.

The protein localises to the lysosome membrane. It localises to the cytoplasm. Its function is as follows. Binding partner of the GTPase-activating protein FLCN: involved in the cellular response to amino acid availability by regulating the non-canonical mTORC1 signaling cascade controlling the MiT/TFE factors TFEB and TFE3. Required to promote FLCN recruitment to lysosomes and interaction with Rag GTPases, leading to activation of the non-canonical mTORC1 signaling. In low-amino acid conditions, component of the lysosomal folliculin complex (LFC) on the membrane of lysosomes, which inhibits the GTPase-activating activity of FLCN, thereby inactivating mTORC1 and promoting nuclear translocation of TFEB and TFE3. Upon amino acid restimulation, disassembly of the LFC complex liberates the GTPase-activating activity of FLCN, leading to activation of mTORC1 and subsequent inactivation of TFEB and TFE3. Together with FLCN, regulates autophagy: following phosphorylation by ULK1, interacts with GABARAP and promotes autophagy. In addition to its role in mTORC1 signaling, also acts as a co-chaperone of HSP90AA1/Hsp90: inhibits the ATPase activity of HSP90AA1/Hsp90, leading to activate both kinase and non-kinase client proteins of HSP90AA1/Hsp90. Acts as a scaffold to load client protein FLCN onto HSP90AA1/Hsp90. Competes with the activating co-chaperone AHSA1 for binding to HSP90AA1, thereby providing a reciprocal regulatory mechanism for chaperoning of client proteins. May play a role in the signal transduction pathway of apoptosis induced by O6-methylguanine-mispaired lesions. In Mus musculus (Mouse), this protein is Folliculin-interacting protein 2.